Consider the following 338-residue polypeptide: Mas-related G-protein coupled receptor member B2 (338 aa).

At 1 to 40 the chain is on the extracellular side; sequence MSGDFLIKNLSTSAWKTNITVLNGSYYIDTSVCVTRNQAM. N-linked (GlcNAc...) asparagine glycosylation is found at N9, N18, and N23. The chain crosses the membrane as a helical span at residues 41–61; it reads ILLSIIISLVGMGLNAIVLWF. Residues 62-89 lie on the Cytoplasmic side of the membrane; the sequence is LGIRMHTNAFTVYILNLAMADFLYLCSQ. The helical transmembrane segment at 90 to 110 threads the bilayer; that stretch reads FVICLLIAFYIFYSIDINIPL. Residue V111 is a topological domain, extracellular. Residues 112-132 form a helical membrane-spanning segment; sequence LYVVPIFAYLSGLSILSTISI. Topologically, residues 133 to 157 are cytoplasmic; that stretch reads ERCLSVIWPIWYRCKRPRHTSAITC. The chain crosses the membrane as a helical span at residues 158-178; sequence FVLWVMSLLLGLLEGKACGLL. Residues 179 to 191 lie on the Extracellular side of the membrane; the sequence is FNSFDSYWCETFD. Residues 192-212 traverse the membrane as a helical segment; that stretch reads VITNIWSVVFFGVLCGSSLTL. Over 213-231 the chain is Cytoplasmic; the sequence is LVRIFCGSQRIPMTRLYVT. A helical membrane pass occupies residues 232–252; sequence ITLTVLVFLIFGLPFGIYWIL. Topologically, residues 253–268 are extracellular; that stretch reads YQWISNFYYVEICNFY. The chain crosses the membrane as a helical span at residues 269–289; sequence LEILFLSCVNSCMNPIIYFLV. Residues 290-338 lie on the Cytoplasmic side of the membrane; that stretch reads GSIRHRRFRRKTLKLLLQRAMQDTPEEEQSGNKSSSEHPEELETVQSCS. Positions 310 to 338 are disordered; the sequence is MQDTPEEEQSGNKSSSEHPEELETVQSCS.

It belongs to the G-protein coupled receptor 1 family. Mas subfamily. In terms of tissue distribution, mast cell-specific.

It is found in the cell membrane. Mast cell-specific receptor for basic secretagogues, i.e. cationic amphiphilic drugs, as well as endo- or exogenous peptides, consisting of a basic head group and a hydrophobic core. Recognizes and binds small molecules containing a cyclized tetrahydroisoquinoline (THIQ), such as non-steroidal neuromuscular blocking drugs (NMBDs), including tubocurarine and atracurium. In response to these compounds, mediates pseudo-allergic reactions characterized by histamine release, inflammation and airway contraction. This chain is Mas-related G-protein coupled receptor member B2 (Mrgprb2), found in Mus musculus (Mouse).